A 345-amino-acid polypeptide reads, in one-letter code: Chorismate synthase (345 aa).

Belongs to the chorismate synthase family. Homotetramer. FMNH2 is required as a cofactor.

It carries out the reaction 5-O-(1-carboxyvinyl)-3-phosphoshikimate = chorismate + phosphate. The protein operates within metabolic intermediate biosynthesis; chorismate biosynthesis; chorismate from D-erythrose 4-phosphate and phosphoenolpyruvate: step 7/7. The sequence is that of Chorismate synthase (aroC) from Carsonella ruddii (strain PV).